The chain runs to 364 residues: Paraneoplastic antigen Ma2 homolog (364 aa).

Alanine 2 bears the N-acetylalanine mark. Residues 335-353 (EEEEASFENESIEEPEEGD) show a composition bias toward acidic residues. The interval 335–364 (EEEEASFENESIEEPEEGDGYGRWNHEGDD) is disordered.

Belongs to the PNMA family.

The protein localises to the nucleus. The protein resides in the nucleolus. This Pongo abelii (Sumatran orangutan) protein is Paraneoplastic antigen Ma2 homolog (PNMA2).